Here is a 147-residue protein sequence, read N- to C-terminus: Large ribosomal subunit protein uL15 (147 aa).

The segment at 1 to 42 (MTIKVHHLRPAPGAKTAKTRVGRGEGSKGKTAGRGTKGSKAR) is disordered.

It belongs to the universal ribosomal protein uL15 family. Part of the 50S ribosomal subunit.

Binds to the 23S rRNA. The chain is Large ribosomal subunit protein uL15 from Salinispora arenicola (strain CNS-205).